The following is an 86-amino-acid chain: Cell division topological specificity factor (86 aa).

It belongs to the MinE family.

Prevents the cell division inhibition by proteins MinC and MinD at internal division sites while permitting inhibition at polar sites. This ensures cell division at the proper site by restricting the formation of a division septum at the midpoint of the long axis of the cell. In Parasynechococcus marenigrum (strain WH8102), this protein is Cell division topological specificity factor.